Reading from the N-terminus, the 829-residue chain is Ent-cassa-12,15-diene synthase (829 aa).

Positions 1–50 (MMLLGSPSSGGYGGKFAGASPAGGTTTMAPSAKQPSSRAPPPGITGGRND) are disordered. The segment covering 23–37 (GGTTTMAPSAKQPSS) has biased composition (polar residues). Mg(2+)-binding residues include aspartate 576, aspartate 580, asparagine 720, and glutamate 728. The short motif at 576 to 580 (DDLFD) is the DDXXD motif element.

It belongs to the terpene synthase family. It depends on Mg(2+) as a cofactor. In terms of tissue distribution, expressed in roots and stems.

It carries out the reaction ent-copalyl diphosphate = ent-cassa-12,15-diene + diphosphate. Its function is as follows. Involved in phytocassane phytoalexins biosynthesis. Catalyzes the conversion of ent-copalyl diphosphate to the phytoalexin precursor ent-cassa-12,15-diene. The polypeptide is Ent-cassa-12,15-diene synthase (KSL7) (Oryza sativa subsp. japonica (Rice)).